The sequence spans 51 residues: Cytochrome bd ubiquinol oxidase subunit X (51 aa).

Over 1 to 3 (MWY) the chain is Cytoplasmic. Residues 4–26 (FSWLLGLPLAAAFAVLNAMWYEL) form a helical membrane-spanning segment. Residues 27-51 (MDDRARKRLAADPTAELALEGNKHH) are Periplasmic-facing.

Belongs to the cytochrome ubiquinol oxidase subunit X family. In terms of assembly, may be a subunit of cytochrome ubiquinol oxidase.

It localises to the cell inner membrane. It carries out the reaction 2 a ubiquinol + O2(in) + 4 H(+)(in) = 2 a ubiquinone + 2 H2O(in) + 4 H(+)(out). It participates in energy metabolism; oxidative phosphorylation. Functionally, required for correct functioning of cytochrome bd oxidase. This is Cytochrome bd ubiquinol oxidase subunit X (cydX) from Brucella abortus (strain 2308).